The chain runs to 439 residues: Branched-chain amino acid permease BrnQ (439 aa).

Over 1-9 (MTHQLKSRD) the chain is Cytoplasmic. The helical transmembrane segment at 10–30 (IIALGFMTFALFVGAGNIIFP) threads the bilayer. Residues 31 to 43 (PMVGLQAGEHVWT) are Periplasmic-facing. A helical membrane pass occupies residues 44–64 (AAIGFLITAVGLPVLTVVALA). Over 65–79 (KVGGGVDSLSTPIGK) the chain is Cytoplasmic. A helical transmembrane segment spans residues 80-100 (VAGLLLATVCYLAVGPLFATP). Residues 101 to 118 (RTATVSFEVGIAPLTGDS) lie on the Periplasmic side of the membrane. The helical transmembrane segment at 119–139 (AMPLLIYSVVYFAIVILVSLY) threads the bilayer. At 140–149 (PGKLLDTVGN) the chain is on the cytoplasmic side. Residues 150 to 170 (FLAPLKIIALVILSVAAIVWP) form a helical membrane-spanning segment. The Periplasmic portion of the chain corresponds to 171 to 189 (AGPISNALDAYQNAAFSNG). Residues 190-210 (FVNGYLTMDTLGAMVFGIVIV) traverse the membrane as a helical segment. Residues 211–226 (NAARSRGVTEARLLTR) lie on the Cytoplasmic side of the membrane. Residues 227 to 247 (YTVWAGLMAGVGLTLLYLALF) form a helical membrane-spanning segment. The Periplasmic segment spans residues 248–277 (RLGSDSATLVDQSANGAAILHAYVQHTFGG). A helical membrane pass occupies residues 278–298 (AGSFLLAALIFIACLVTAVGL). Residues 299 to 316 (TCACAEFFAQYIPLSYRT) are Cytoplasmic-facing. A helical membrane pass occupies residues 317–337 (LVFILGGFSMVVSNLGLSHLI). A topological domain (periplasmic) is located at residue glutamine 338. The chain crosses the membrane as a helical span at residues 339–359 (ISIPVLTAIYPPCIALVVLSF). Topologically, residues 360-369 (TRSWWHNSTR) are cytoplasmic. A helical membrane pass occupies residues 370-390 (IIAPAMFISLLFGILDGIKAS). Topologically, residues 391–404 (AFGDMLPAWSQRLP) are periplasmic. Residues 405–425 (LAEQGLAWLMPTVVMVILAII) form a helical membrane-spanning segment. Residues 426–439 (WDRAAGRQVTSSAH) are Cytoplasmic-facing.

Belongs to the branched chain amino acid transporter family.

It localises to the cell inner membrane. In terms of biological role, liv-II branched chain amino acid transport system, which transports leucine, valine and isoleucine. The sequence is that of Branched-chain amino acid permease BrnQ from Salmonella typhimurium (strain LT2 / SGSC1412 / ATCC 700720).